A 269-amino-acid chain; its full sequence is Enoyl-[acyl-carrier-protein] reductase [NADH] (269 aa).

NAD(+) contacts are provided by residues serine 20–isoleucine 21, aspartate 64–valine 65, and isoleucine 95–glycine 96. Tyrosine 158 is a binding site for substrate. NAD(+) contacts are provided by lysine 165 and isoleucine 194. Threonine 266 carries the phosphothreonine modification.

It belongs to the short-chain dehydrogenases/reductases (SDR) family. FabI subfamily. Homodimer. Homotetramer. In terms of processing, is phosphorylated in vivo. Phosphorylation on Thr-266 decreases enzymatic activity.

The protein localises to the secreted. It is found in the cell wall. It carries out the reaction a 2,3-saturated acyl-[ACP] + NAD(+) = a (2E)-enoyl-[ACP] + NADH + H(+). The catalysed reaction is a 2,3-saturated acyl-CoA + NAD(+) = a (2E)-enoyl-CoA + NADH + H(+). The enzyme catalyses (2E)-octenoyl-CoA + NADH + H(+) = octanoyl-CoA + NAD(+). It catalyses the reaction (2E)-dodecenoyl-CoA + NADH + H(+) = dodecanoyl-CoA + NAD(+). Its pathway is lipid metabolism; mycolic acid biosynthesis. With respect to regulation, inhA activity is controlled via phosphorylation: phosphorylation on Thr-266 decreases InhA activity and likely negatively regulates biosynthesis of mycolic acids and growth of the bacterium. InhA activity is likely inhibited by activated isoniazid, hexadecynoyl-CoA and octadecynoyl-CoA, which also block the biosynthesis of mycolic acids. The antitubercular pro-drug isoniazid (INH) is oxidatively activated by the catalase-peroxidase KatG and then covalently binds NAD to form an adduct that inhibits the activity of InhA. The inhibitory adduct is the isonicotinic-acyl-NADH where the isonicotinic-acyl group replaces the 4S (and not the 4R) hydrogen of NADH. Similarly, the antitubercular pro-drugs ethionamide (ETH) and prothionamide (PTH) are activated by the flavoprotein monooxygenase EthA, and forms an adduct with NAD (ETH-NAD and PTH-NAD, respectively) that is a tight-binding inhibitor of InhA. Its function is as follows. Enoyl-ACP reductase of the type II fatty acid syntase (FAS-II) system, which is involved in the biosynthesis of mycolic acids, a major component of mycobacterial cell walls. Catalyzes the NADH-dependent reduction of the double bond of 2-trans-enoyl-[acyl-carrier protein], an essential step in the fatty acid elongation cycle of the FAS-II pathway. Shows preference for long-chain fatty acyl thioester substrates (&gt;C16), and can also use 2-trans-enoyl-CoAs as alternative substrates. The mycobacterial FAS-II system utilizes the products of the FAS-I system as primers to extend fatty acyl chain lengths up to C56, forming the meromycolate chain that serves as the precursor for final mycolic acids. In terms of biological role, is the primary target of the first-line antitubercular drug isoniazid (INH) and of the second-line drug ethionamide (ETH). Overexpressed inhA confers INH and ETH resistance to M.smegmatis. The mechanism of isoniazid action against InhA is covalent attachment of the activated form of the drug to the nicotinamide ring of NAD and binding of the INH-NAD adduct to the active site of InhA. Similarly, the ETH-NAD adduct binds InhA. This is Enoyl-[acyl-carrier-protein] reductase [NADH] from Mycolicibacterium smegmatis (strain ATCC 700084 / mc(2)155) (Mycobacterium smegmatis).